The primary structure comprises 231 residues: 5'-methylthioadenosine/S-adenosylhomocysteine nucleosidase (231 aa).

Catalysis depends on E12, which acts as the Proton acceptor. Residues G78, V153, and 174–175 (ME) each bind substrate. D198 serves as the catalytic Proton donor.

Belongs to the PNP/UDP phosphorylase family. MtnN subfamily.

The enzyme catalyses S-adenosyl-L-homocysteine + H2O = S-(5-deoxy-D-ribos-5-yl)-L-homocysteine + adenine. It catalyses the reaction S-methyl-5'-thioadenosine + H2O = 5-(methylsulfanyl)-D-ribose + adenine. The catalysed reaction is 5'-deoxyadenosine + H2O = 5-deoxy-D-ribose + adenine. It functions in the pathway amino-acid biosynthesis; L-methionine biosynthesis via salvage pathway; S-methyl-5-thio-alpha-D-ribose 1-phosphate from S-methyl-5'-thioadenosine (hydrolase route): step 1/2. Catalyzes the irreversible cleavage of the glycosidic bond in both 5'-methylthioadenosine (MTA) and S-adenosylhomocysteine (SAH/AdoHcy) to adenine and the corresponding thioribose, 5'-methylthioribose and S-ribosylhomocysteine, respectively. Also cleaves 5'-deoxyadenosine, a toxic by-product of radical S-adenosylmethionine (SAM) enzymes, into 5-deoxyribose and adenine. The polypeptide is 5'-methylthioadenosine/S-adenosylhomocysteine nucleosidase (Aliivibrio salmonicida (strain LFI1238) (Vibrio salmonicida (strain LFI1238))).